We begin with the raw amino-acid sequence, 269 residues long: Protein RKD1 (269 aa).

The RWP-RK domain maps to 106-195; that stretch reads TTTTKKRRCR…EKMEGEENED (90 aa). The stretch at 175–216 forms a coiled coil; sequence LQKLISNVKELEKMEGEENEDKLRNALEKLEKEKKTIEKLPD. The interval 230–269 is disordered; sequence CFKANHKRKRRSGMSTPITSSSSSASASSSSYSSVSGFER. Positions 249-269 are enriched in low complexity; the sequence is SSSSSASASSSSYSSVSGFER.

The protein localises to the nucleus. Putative transcription factor. The sequence is that of Protein RKD1 (RKD1) from Arabidopsis thaliana (Mouse-ear cress).